A 721-amino-acid polypeptide reads, in one-letter code: S-adenosyl-L-methionine-dependent tRNA 4-demethylwyosine synthase TYW1 (721 aa).

The Flavodoxin-like domain occupies 71–229; it reads VKIFYGSQTG…DFTAWKTKFI (159 aa). FMN-binding positions include 77–81 and 168–200; these read SQTGT and VFGL…QRVL. Disordered regions lie at residues 242 to 291 and 305 to 339; these read ACGG…ELGT and DLGN…TEDG. A compositionally biased stretch (basic and acidic residues) spans 250–274; that stretch reads GKCESAQHGPGEARPHPQGELHPGD. The span at 275 to 290 shows a compositional bias: acidic residues; sequence AEEEEPCESSSEDELG. Residues 313 to 325 are compositionally biased toward basic and acidic residues; it reads VKREKREKSHQDG. The 247-residue stretch at 389-635 folds into the Radical SAM core domain; the sequence is YGIESHRCME…LLPDYEVACE (247 aa). Positions 405, 409, and 412 each coordinate [4Fe-4S] cluster.

This sequence belongs to the TYW1 family. Requires [4Fe-4S] cluster as cofactor.

The enzyme catalyses N(1)-methylguanosine(37) in tRNA(Phe) + pyruvate + S-adenosyl-L-methionine = 4-demethylwyosine(37) in tRNA(Phe) + 5'-deoxyadenosine + L-methionine + CO2 + H2O. The protein operates within tRNA modification; wybutosine-tRNA(Phe) biosynthesis. Its function is as follows. Probable component of the wybutosine biosynthesis pathway. Wybutosine is a hyper modified guanosine with a tricyclic base found at the 3'-position adjacent to the anticodon of eukaryotic phenylalanine tRNA. Catalyzes the condensation of N-methylguanine with 2 carbon atoms from pyruvate to form the tricyclic 4-demethylwyosine, an intermediate in wybutosine biosynthesis. The chain is S-adenosyl-L-methionine-dependent tRNA 4-demethylwyosine synthase TYW1 (Tyw1) from Mus musculus (Mouse).